The primary structure comprises 217 residues: Probable transaldolase (217 aa).

Lysine 83 serves as the catalytic Schiff-base intermediate with substrate.

This sequence belongs to the transaldolase family. Type 3B subfamily.

It localises to the cytoplasm. It carries out the reaction D-sedoheptulose 7-phosphate + D-glyceraldehyde 3-phosphate = D-erythrose 4-phosphate + beta-D-fructose 6-phosphate. It participates in carbohydrate degradation; pentose phosphate pathway; D-glyceraldehyde 3-phosphate and beta-D-fructose 6-phosphate from D-ribose 5-phosphate and D-xylulose 5-phosphate (non-oxidative stage): step 2/3. Its function is as follows. Transaldolase is important for the balance of metabolites in the pentose-phosphate pathway. In Jannaschia sp. (strain CCS1), this protein is Probable transaldolase.